The chain runs to 301 residues: Probable alpha-L-glutamate ligase 1 (301 aa).

Residues 104-287 (LQLLSRKGIG…VTEPIVEYIE (184 aa)) enclose the ATP-grasp domain. Residues K141, 178–179 (EY), D187, and 211–213 (RSN) contribute to the ATP site. Mg(2+)-binding residues include D248, E260, and N262. Mn(2+)-binding residues include D248, E260, and N262.

The protein belongs to the RimK family. The cofactor is Mg(2+). It depends on Mn(2+) as a cofactor.

This is Probable alpha-L-glutamate ligase 1 from Shewanella sp. (strain W3-18-1).